A 163-amino-acid chain; its full sequence is uncharacterized protein (163 aa).

Residues 1-33 (MKTLDKITNYDLFDFADEFLKFVPVFRPNPTVT) lie on the Cytoplasmic side of the membrane. The helical transmembrane segment at 34–54 (CLFGNPLTNLLVNGTGAACFF) threads the bilayer. Over 55 to 117 (EFCSLALIKV…SLGMALPDDD (63 aa)) the chain is Extracellular. The helical transmembrane segment at 118–138 (VLLSITFWFLCNSSFSILFVF) threads the bilayer. Topologically, residues 139-163 (ELRIFLRTVNNLLVVFLSVLKRNDL) are cytoplasmic.

It is found in the membrane. This is an uncharacterized protein from Saccharomyces cerevisiae (strain ATCC 204508 / S288c) (Baker's yeast).